A 384-amino-acid polypeptide reads, in one-letter code: MNRFTTSQGAFELARFPEHPRDPFRAWDAADDYLLQQLTDPGTGPVDLSGTVAVVGDRWGALATALAAHRPVQISDSYLARRATLANLARNGIDEDAVRLLSSRDTPPDRIDVLLVRVPKSLAFLEDQLHRLAPAVHSGTVVIGTGMVKEIHTSTLKIFERIIGPTRTSLAVRKARLIFSTPDPALPRTLSPWPYRYELPADVGPVAGLTAVNHAGIFCAERLDIGTRFFLKHLPTRSGAVRVVDLGCGNGVLGLSAAVANPDAHLTFVDESYGAVASAEETFRAGAPAGAKADFLVGDGLADLDPGSVDLVLNNPPFHSHLATTDATARTMFAGAKTALRRGGELWVVGNRHLSYHTHLRRIFGNCTTVAGDPKFVVLRAVKR.

This sequence belongs to the methyltransferase superfamily. RlmG family.

It is found in the cytoplasm. It catalyses the reaction guanosine(1835) in 23S rRNA + S-adenosyl-L-methionine = N(2)-methylguanosine(1835) in 23S rRNA + S-adenosyl-L-homocysteine + H(+). Specifically methylates the guanine in position 1835 (m2G1835) of 23S rRNA. In Streptomyces griseus subsp. griseus (strain JCM 4626 / CBS 651.72 / NBRC 13350 / KCC S-0626 / ISP 5235), this protein is Ribosomal RNA large subunit methyltransferase G.